We begin with the raw amino-acid sequence, 192 residues long: Xanthine phosphoribosyltransferase (192 aa).

Xanthine is bound by residues Leu-20 and Asn-27. 128–132 (ANGDA) is a 5-phospho-alpha-D-ribose 1-diphosphate binding site. Lys-156 lines the xanthine pocket.

This sequence belongs to the purine/pyrimidine phosphoribosyltransferase family. Xpt subfamily. In terms of assembly, homodimer.

It localises to the cytoplasm. The catalysed reaction is XMP + diphosphate = xanthine + 5-phospho-alpha-D-ribose 1-diphosphate. It functions in the pathway purine metabolism; XMP biosynthesis via salvage pathway; XMP from xanthine: step 1/1. Functionally, converts the preformed base xanthine, a product of nucleic acid breakdown, to xanthosine 5'-monophosphate (XMP), so it can be reused for RNA or DNA synthesis. The chain is Xanthine phosphoribosyltransferase from Staphylococcus epidermidis (strain ATCC 35984 / DSM 28319 / BCRC 17069 / CCUG 31568 / BM 3577 / RP62A).